The sequence spans 69 residues: MGMRMMFVVFLLVVLASTVVSSTSGRRAFHGRNAAAKASGLVSLTDRRPECCSDPRCNSSHPELCGGRR.

Positions 1–21 (MGMRMMFVVFLLVVLASTVVS) are cleaved as a signal peptide. Residues 22-49 (STSGRRAFHGRNAAAKASGLVSLTDRRP) constitute a propeptide that is removed on maturation. Cystine bridges form between Cys-51–Cys-57 and Cys-52–Cys-65. The interval 53–55 (SDP) is ser-Xaa-Pro motif, crucial for potent interaction with nAChR. Gly-66 is modified (glycine amide).

The protein belongs to the conotoxin A superfamily. In terms of tissue distribution, expressed by the venom duct.

The protein resides in the secreted. Its function is as follows. Alpha-conotoxins act on postsynaptic membranes, they bind to the nicotinic acetylcholine receptors (nAChR) and thus inhibit them. The polypeptide is Alpha-conotoxin-like Tx1 (Conus textile (Cloth-of-gold cone)).